Consider the following 206-residue polypeptide: Thymidylate kinase (206 aa).

10–17 (GNDGSGKS) is an ATP binding site.

This sequence belongs to the thymidylate kinase family.

It carries out the reaction dTMP + ATP = dTDP + ADP. Its function is as follows. Phosphorylation of dTMP to form dTDP in both de novo and salvage pathways of dTTP synthesis. The polypeptide is Thymidylate kinase (Caldicellulosiruptor saccharolyticus (strain ATCC 43494 / DSM 8903 / Tp8T 6331)).